A 233-amino-acid polypeptide reads, in one-letter code: Leucyl/phenylalanyl-tRNA--protein transferase (233 aa).

It belongs to the L/F-transferase family.

It is found in the cytoplasm. It carries out the reaction N-terminal L-lysyl-[protein] + L-leucyl-tRNA(Leu) = N-terminal L-leucyl-L-lysyl-[protein] + tRNA(Leu) + H(+). The enzyme catalyses N-terminal L-arginyl-[protein] + L-leucyl-tRNA(Leu) = N-terminal L-leucyl-L-arginyl-[protein] + tRNA(Leu) + H(+). The catalysed reaction is L-phenylalanyl-tRNA(Phe) + an N-terminal L-alpha-aminoacyl-[protein] = an N-terminal L-phenylalanyl-L-alpha-aminoacyl-[protein] + tRNA(Phe). Functions in the N-end rule pathway of protein degradation where it conjugates Leu, Phe and, less efficiently, Met from aminoacyl-tRNAs to the N-termini of proteins containing an N-terminal arginine or lysine. The polypeptide is Leucyl/phenylalanyl-tRNA--protein transferase (Anaeromyxobacter dehalogenans (strain 2CP-C)).